Consider the following 94-residue polypeptide: MESRDVILRPVITEASMAELDNKRYTFDVDTRATKSQIKDAVEDIFEVKVAKVNVMNVKGKKKRMGRYEGYTKKRRKAIVTLTAESKEIKLFEE.

This sequence belongs to the universal ribosomal protein uL23 family. Part of the 50S ribosomal subunit. Contacts protein L29, and trigger factor when it is bound to the ribosome.

In terms of biological role, one of the early assembly proteins it binds 23S rRNA. One of the proteins that surrounds the polypeptide exit tunnel on the outside of the ribosome. Forms the main docking site for trigger factor binding to the ribosome. The protein is Large ribosomal subunit protein uL23 of Ligilactobacillus salivarius (strain UCC118) (Lactobacillus salivarius).